The primary structure comprises 130 residues: Small ribosomal subunit protein uS9 (130 aa).

Belongs to the universal ribosomal protein uS9 family.

This chain is Small ribosomal subunit protein uS9, found in Pseudomonas putida (strain W619).